The primary structure comprises 261 residues: tRNA pseudouridine synthase A (261 aa).

Aspartate 53 (nucleophile) is an active-site residue. Position 111 (tyrosine 111) interacts with substrate.

The protein belongs to the tRNA pseudouridine synthase TruA family. As to quaternary structure, homodimer.

It carries out the reaction uridine(38/39/40) in tRNA = pseudouridine(38/39/40) in tRNA. Formation of pseudouridine at positions 38, 39 and 40 in the anticodon stem and loop of transfer RNAs. The sequence is that of tRNA pseudouridine synthase A from Shouchella clausii (strain KSM-K16) (Alkalihalobacillus clausii).